The primary structure comprises 314 residues: Methionyl-tRNA formyltransferase (314 aa).

113–116 (SLLP) lines the (6S)-5,6,7,8-tetrahydrofolate pocket.

This sequence belongs to the Fmt family.

The enzyme catalyses L-methionyl-tRNA(fMet) + (6R)-10-formyltetrahydrofolate = N-formyl-L-methionyl-tRNA(fMet) + (6S)-5,6,7,8-tetrahydrofolate + H(+). Its function is as follows. Attaches a formyl group to the free amino group of methionyl-tRNA(fMet). The formyl group appears to play a dual role in the initiator identity of N-formylmethionyl-tRNA by promoting its recognition by IF2 and preventing the misappropriation of this tRNA by the elongation apparatus. The polypeptide is Methionyl-tRNA formyltransferase (Pseudomonas savastanoi pv. phaseolicola (strain 1448A / Race 6) (Pseudomonas syringae pv. phaseolicola (strain 1448A / Race 6))).